A 116-amino-acid chain; its full sequence is MRERTSRRIMQRFTIHDLAAIIDARAASGGDASYTRKLLDKGPAHCARKLGEEAVETIIAAVEKDRHHLIAEGADLMFHFLVLLKASGVTLQDVEAVLAQRTAISGLEEKAARNRD.

It belongs to the PRA-PH family.

Its subcellular location is the cytoplasm. The enzyme catalyses 1-(5-phospho-beta-D-ribosyl)-ATP + H2O = 1-(5-phospho-beta-D-ribosyl)-5'-AMP + diphosphate + H(+). The protein operates within amino-acid biosynthesis; L-histidine biosynthesis; L-histidine from 5-phospho-alpha-D-ribose 1-diphosphate: step 2/9. The protein is Phosphoribosyl-ATP pyrophosphatase of Nitrobacter winogradskyi (strain ATCC 25391 / DSM 10237 / CIP 104748 / NCIMB 11846 / Nb-255).